A 323-amino-acid chain; its full sequence is MAAAARGSGRAPTRRLLVLLLLQLLWAPAGVRAGPEEDLSHRNQEPPAPAQQLQPQPAAVQGLEPARAEKGLTPVAPVHTNKEDAAAQTNLGFIHAFVAAISVIIVSELGDKTFFIAAIMAMRYNRLTVLAGAMLALALMTCLSVLFGYATTVIPRVYTYYVSTALFAIFGIRMLREGLKMSPDEGQEELEEVQAELKKKDEEFQRTKLLNGPDVETGTSTAIPQKKWLHFISPIFVQALTLTFLAEWGDRSQLTTIVLAAREDPYGVAVGGTVGHCLCTGLAVIGGRMIAQKISVRTVTIIGGIVFLAFAFSALFISPESGF.

A signal peptide spans 1 to 33; that stretch reads MAAAARGSGRAPTRRLLVLLLLQLLWAPAGVRA. Residues 34 to 89 lie on the Lumenal side of the membrane; that stretch reads GPEEDLSHRNQEPPAPAQQLQPQPAAVQGLEPARAEKGLTPVAPVHTNKEDAAAQT. Basic and acidic residues predominate over residues 35 to 44; the sequence is PEEDLSHRNQ. The tract at residues 35–60 is disordered; the sequence is PEEDLSHRNQEPPAPAQQLQPQPAAV. Low complexity predominate over residues 50–59; the sequence is AQQLQPQPAA. Residues 90–110 form a helical membrane-spanning segment; it reads NLGFIHAFVAAISVIIVSELG. The Cytoplasmic segment spans residues 111–126; the sequence is DKTFFIAAIMAMRYNR. Residues 127–147 traverse the membrane as a helical segment; the sequence is LTVLAGAMLALALMTCLSVLF. The Lumenal segment spans residues 148 to 151; it reads GYAT. The helical transmembrane segment at 152 to 172 threads the bilayer; sequence TVIPRVYTYYVSTALFAIFGI. Topologically, residues 173-227 are cytoplasmic; that stretch reads RMLREGLKMSPDEGQEELEEVQAELKKKDEEFQRTKLLNGPDVETGTSTAIPQKK. The stretch at 184 to 211 forms a coiled coil; sequence DEGQEELEEVQAELKKKDEEFQRTKLLN. Residues 228–248 traverse the membrane as a helical segment; that stretch reads WLHFISPIFVQALTLTFLAEW. The Lumenal portion of the chain corresponds to 249–266; it reads GDRSQLTTIVLAAREDPY. A helical transmembrane segment spans residues 267–287; sequence GVAVGGTVGHCLCTGLAVIGG. Topologically, residues 288-298 are cytoplasmic; that stretch reads RMIAQKISVRT. A helical transmembrane segment spans residues 299–319; sequence VTIIGGIVFLAFAFSALFISP. Over 320-323 the chain is Lumenal; sequence ESGF.

This sequence belongs to the GDT1 family. Expressed in mammary epithelial cells (at protein level).

It localises to the golgi apparatus membrane. The enzyme catalyses Ca(2+)(in) + n H(+)(out) = Ca(2+)(out) + n H(+)(in). The catalysed reaction is Mn(2+)(in) + n H(+)(out) = Mn(2+)(out) + n H(+)(in). Its function is as follows. Putative divalent cation:proton antiporter that exchanges calcium or manganese ions for protons across the Golgi membrane. Mediates the reversible transport of calcium or manganese to the Golgi lumen driven by the proton gradient and possibly the membrane potential generated by V-ATPase. Provides calcium or manganese cofactors to resident Golgi enzymes and contributes to the maintenance of an acidic luminal Golgi pH required for proper functioning of the secretory pathway. Promotes Ca(2+) storage within the Golgi lumen of the mammary epithelial cells to be then secreted into milk. The transport mechanism and stoichiometry remains to be elucidated. The chain is Putative divalent cation/proton antiporter TMEM165 from Mus musculus (Mouse).